Here is a 306-residue protein sequence, read N- to C-terminus: MSVCQTNPLNTLVSKSGYRFGQPNQHQQSIAQQQSRPRNNALDHQFSQFTGASGPSFAHPQHQQLPMAAVVANATTAASTTSNTATASDHHVWIDQFANMQVHDKTEFPTDYKQMYSQYEARGASYSMGAPVMVSHSQMFPRHQQSLMVNQLESQAYASSSAKLDEQFAELERQVQDDEKEQQQDKDDDFHLKETSPLDEDQRQLKEAAQSIYTTLSDKSSTTSSKFSNSKFLGLMRNISDGVITLKKNPDEDKYTELYSPSTGETFGEEYFPVQDSVLGDPLDSIGDLSNMSSSEAAAKVYHNSV.

Cys4 participates in a covalent cross-link: Glycyl cysteine thioester (Cys-Gly) (interchain with G-Cter in ubiquitin). Positions 172 to 203 are disordered; it reads ERQVQDDEKEQQQDKDDDFHLKETSPLDEDQR.

The protein belongs to the peroxin-21 family. As to quaternary structure, interacts with PEX7. Post-translationally, monoubiquitinated at Cys-4; acts as a signal for PEX21 extraction and is required for proper export from peroxisomes and recycling.

Its subcellular location is the cytoplasm. The protein localises to the cytosol. The protein resides in the peroxisome. Its function is as follows. Mediates peroxisomal import of proteins containing a C-terminal PTS2-type peroxisomal targeting signal via its interaction with PEX7. Interaction with PEX7 only takes place when PEX7 is associated with cargo proteins containing a PTS2 peroxisomal targeting signal. PEX7 along with PTS2-containing cargo proteins are then translocated through the PEX13-PEX14 docking complex together with PEX21. In Kluyveromyces lactis (strain ATCC 8585 / CBS 2359 / DSM 70799 / NBRC 1267 / NRRL Y-1140 / WM37) (Yeast), this protein is Peroxisomal protein PEX21 (PEX21).